Consider the following 482-residue polypeptide: Cobyric acid synthase (482 aa).

In terms of domain architecture, GATase cobBQ-type spans 243–430 (ACKVVVPQLE…LHGLFTSDAF (188 aa)). The Nucleophile role is filled by Cys-325. His-422 is an active-site residue.

This sequence belongs to the CobB/CobQ family. CobQ subfamily.

It functions in the pathway cofactor biosynthesis; adenosylcobalamin biosynthesis. In terms of biological role, catalyzes amidations at positions B, D, E, and G on adenosylcobyrinic A,C-diamide. NH(2) groups are provided by glutamine, and one molecule of ATP is hydrogenolyzed for each amidation. This Ruegeria sp. (strain TM1040) (Silicibacter sp.) protein is Cobyric acid synthase.